A 207-amino-acid chain; its full sequence is Glycerol-3-phosphate acyltransferase (207 aa).

5 helical membrane passes run leucine 3–glycine 23, threonine 54–phenylalanine 74, glycine 81–phenylalanine 101, proline 122–valine 142, and leucine 158–tyrosine 178.

Belongs to the PlsY family. As to quaternary structure, probably interacts with PlsX.

It is found in the cell membrane. The catalysed reaction is an acyl phosphate + sn-glycerol 3-phosphate = a 1-acyl-sn-glycero-3-phosphate + phosphate. It functions in the pathway lipid metabolism; phospholipid metabolism. Its function is as follows. Catalyzes the transfer of an acyl group from acyl-phosphate (acyl-PO(4)) to glycerol-3-phosphate (G3P) to form lysophosphatidic acid (LPA). This enzyme utilizes acyl-phosphate as fatty acyl donor, but not acyl-CoA or acyl-ACP. This Levilactobacillus brevis (strain ATCC 367 / BCRC 12310 / CIP 105137 / JCM 1170 / LMG 11437 / NCIMB 947 / NCTC 947) (Lactobacillus brevis) protein is Glycerol-3-phosphate acyltransferase.